A 64-amino-acid chain; its full sequence is Large ribosomal subunit protein bL33 (64 aa).

This sequence belongs to the bacterial ribosomal protein bL33 family.

This chain is Large ribosomal subunit protein bL33, found in Rippkaea orientalis (strain PCC 8801 / RF-1) (Cyanothece sp. (strain PCC 8801)).